The chain runs to 429 residues: Serine--tRNA ligase (429 aa).

235–237 (TAE) contributes to the L-serine binding site. 266 to 268 (RSE) lines the ATP pocket. An L-serine-binding site is contributed by Glu289. 353–356 (EISS) lines the ATP pocket. Ser389 lines the L-serine pocket.

The protein belongs to the class-II aminoacyl-tRNA synthetase family. Type-1 seryl-tRNA synthetase subfamily. As to quaternary structure, homodimer. The tRNA molecule binds across the dimer.

It is found in the cytoplasm. It carries out the reaction tRNA(Ser) + L-serine + ATP = L-seryl-tRNA(Ser) + AMP + diphosphate + H(+). It catalyses the reaction tRNA(Sec) + L-serine + ATP = L-seryl-tRNA(Sec) + AMP + diphosphate + H(+). It participates in aminoacyl-tRNA biosynthesis; selenocysteinyl-tRNA(Sec) biosynthesis; L-seryl-tRNA(Sec) from L-serine and tRNA(Sec): step 1/1. Functionally, catalyzes the attachment of serine to tRNA(Ser). Is also able to aminoacylate tRNA(Sec) with serine, to form the misacylated tRNA L-seryl-tRNA(Sec), which will be further converted into selenocysteinyl-tRNA(Sec). The protein is Serine--tRNA ligase of Histophilus somni (strain 129Pt) (Haemophilus somnus).